The chain runs to 421 residues: MISIELIRKNPEYVKENLAKRDMFLKDRIDDILKLDEERRHKIKRIEDLRALRNAKSKEIGSLKKQGLNTESLEEEIRLIKEEISKLEEELARIEKYTEDLLLRVPNLLHESVPYGKDENDNVEIKRWGEIPKFDFGIKDHADLGVLRGFIDFDQATAISGSRFSILKGPLAKLERALINFMLEINAKNGYQEMIVPHLVKPQTLVGTGQLPKFQEELYYVKDDDLYLIPTAEVPLVNVFKDTILKEDDLPINLTAYTPCYRREAGSHGKDVKGLIRQHQFDKVELVKIVHPDSSYDELERLLSNAEEILQLLELPYRVVALCSGDIGFSASKTYDIEVWIPSQNKYREISSCSNCEDFQARRANMRFKDKTGKNRFVHTLNGSSLAVGRTLVAIMENYQTKDHKIRIPKVLKDYIKGECI.

231–233 (TAE) is a binding site for L-serine. 262–264 (RRE) lines the ATP pocket. E285 contributes to the L-serine binding site. 349 to 352 (EISS) serves as a coordination point for ATP. S384 is a binding site for L-serine.

This sequence belongs to the class-II aminoacyl-tRNA synthetase family. Type-1 seryl-tRNA synthetase subfamily. As to quaternary structure, homodimer. The tRNA molecule binds across the dimer.

The protein resides in the cytoplasm. The enzyme catalyses tRNA(Ser) + L-serine + ATP = L-seryl-tRNA(Ser) + AMP + diphosphate + H(+). It carries out the reaction tRNA(Sec) + L-serine + ATP = L-seryl-tRNA(Sec) + AMP + diphosphate + H(+). Its pathway is aminoacyl-tRNA biosynthesis; selenocysteinyl-tRNA(Sec) biosynthesis; L-seryl-tRNA(Sec) from L-serine and tRNA(Sec): step 1/1. In terms of biological role, catalyzes the attachment of serine to tRNA(Ser). Is also able to aminoacylate tRNA(Sec) with serine, to form the misacylated tRNA L-seryl-tRNA(Sec), which will be further converted into selenocysteinyl-tRNA(Sec). The chain is Serine--tRNA ligase from Hydrogenobaculum sp. (strain Y04AAS1).